The sequence spans 59 residues: Three-finger toxin MS1 (59 aa).

4 cysteine pairs are disulfide-bonded: C3/C22, C17/C39, C41/C52, and C53/C58.

The protein belongs to the three-finger toxin family. Short-chain subfamily. Type I alpha-neurotoxin sub-subfamily. Expressed by the venom gland.

It localises to the secreted. Functionally, produces peripheral paralysis by blocking neuromuscular transmission at the postsynaptic site. Binds to and inhibits the endogenous nicotinic acetylcholine receptors (nAChR) in human rhabdomyosarcoma TE 671 cell line with an IC(50) of 48.2 mM. This neurotoxin is lethal to mice by intraperitoneal injection and to zebrafish by injection at the back of the dorsolateral region. This Micrurus surinamensis (Surinam coral snake) protein is Three-finger toxin MS1.